The sequence spans 177 residues: Ribosome maturation factor RimM (177 aa).

Residues 104-176 (DGEYYFFEIL…KIIVNMPEWL (73 aa)) enclose the PRC barrel domain.

Belongs to the RimM family. In terms of assembly, binds ribosomal protein uS19.

It is found in the cytoplasm. In terms of biological role, an accessory protein needed during the final step in the assembly of 30S ribosomal subunit, possibly for assembly of the head region. Essential for efficient processing of 16S rRNA. May be needed both before and after RbfA during the maturation of 16S rRNA. It has affinity for free ribosomal 30S subunits but not for 70S ribosomes. In Fervidobacterium nodosum (strain ATCC 35602 / DSM 5306 / Rt17-B1), this protein is Ribosome maturation factor RimM.